Consider the following 378-residue polypeptide: Alcohol dehydrogenase class-3 (378 aa).

N-acetylalanine is present on alanine 1. Cysteine 46 provides a ligand contact to Zn(2+). Histidine 47 contributes to the NAD(+) binding site. Residues threonine 48 and histidine 68 each coordinate an alcohol. Zn(2+)-binding residues include histidine 68, glutamate 69, cysteine 98, cysteine 101, cysteine 104, cysteine 112, and cysteine 176. NAD(+)-binding positions include 201–206, aspartate 225, lysine 230, 294–296, 319–321, and arginine 371; these read GLGTVG, VGV, and TAF.

This sequence belongs to the zinc-containing alcohol dehydrogenase family. Class-III subfamily. Homodimer. Zn(2+) serves as cofactor.

It is found in the cytoplasm. It catalyses the reaction a primary alcohol + NAD(+) = an aldehyde + NADH + H(+). The enzyme catalyses a secondary alcohol + NAD(+) = a ketone + NADH + H(+). The catalysed reaction is S-(hydroxymethyl)glutathione + NADP(+) = S-formylglutathione + NADPH + H(+). It carries out the reaction S-(hydroxymethyl)glutathione + NAD(+) = S-formylglutathione + NADH + H(+). Functionally, class-III ADH is remarkably ineffective in oxidizing ethanol, but it readily catalyzes the oxidation of long-chain primary alcohols and the oxidation of S-(hydroxymethyl) glutathione. The polypeptide is Alcohol dehydrogenase class-3 (Pisum sativum (Garden pea)).